Consider the following 954-residue polypeptide: Lysine-specific demethylase JMJ14 (954 aa).

The tract at residues 1–46 (MDQLASLAESVAMEEDSEKQSIKGESSLEPDSTPSSPKITARWNPS) is disordered. The span at 29–38 (EPDSTPSSPK) shows a compositional bias: polar residues. Residues 56-97 (APIFYPTNEDFDDPLGYIEKLRSKAESYGICRIVPPVAWRPP) enclose the JmjN domain. Positions 136–143 (RKRRRISK) match the Nuclear localization signal 1 motif. The interval 148–170 (RRKRDSGCDTASSGSSDSEGKFG) is disordered. The region spanning 263–429 (QYSQCGWNLN…HGQNAVEGYS (167 aa)) is the JmjC domain. The Fe cation site is built by H309, E311, and H397. The Nuclear localization signal 2 signature appears at 470-477 (WKRVCSED). Positions 519, 522, 533, 535, 542, 545, 550, and 552 each coordinate Zn(2+). The C5HC2 zinc-finger motif lies at 519-571 (CFLCFYDLHMSASSCKCSPNRFACLIHAKDLCSCESKDRYILIRHTLDELWAL). The disordered stretch occupies residues 641–670 (SNKEVQLKQDGDSDVNRHGHESERNHVHGI). The segment covering 645-670 (VQLKQDGDSDVNRHGHESERNHVHGI) has biased composition (basic and acidic residues). An FYR N-terminal domain is found at 726–784 (ATNRLSLSVELLSSGSLVVKKLWCSKQAIYPKGFKSRVKFLSVLDPTNLTNYISEVLDA). Residues 786–876 (LLGPLFRVSV…HQLEEYWNQK (91 aa)) enclose the FYR C-terminal domain. Residues 884 to 905 (EPIKEGEKDDTEKGGASDPSLD) form a disordered region. Residues 885-905 (PIKEGEKDDTEKGGASDPSLD) show a composition bias toward basic and acidic residues.

It belongs to the JARID1 histone demethylase family. As to quaternary structure, interacts with NAC050 and NAC051/NAC052. Interacts with THAL in the nucleus. Requires Fe(2+) as cofactor. Expressed in shoot apex, primary root tip, trichomes of young leaves, leaf vascular tissues, anther filaments and styles. Detected in inflorescences, leaves, stems, roots and siliques. Mostly expressed in floral organs, and, at low levels, in other organs.

Its subcellular location is the nucleus. It is found in the nucleoplasm. It catalyses the reaction N(6),N(6),N(6)-trimethyl-L-lysyl(4)-[histone H3] + 2-oxoglutarate + O2 = N(6),N(6)-dimethyl-L-lysyl(4)-[histone H3] + formaldehyde + succinate + CO2. The enzyme catalyses N(6),N(6)-dimethyl-L-lysyl(4)-[histone H3] + 2-oxoglutarate + O2 = N(6)-methyl-L-lysyl(4)-[histone H3] + formaldehyde + succinate + CO2. It carries out the reaction N(6)-methyl-L-lysyl(4)-[histone H3] + 2-oxoglutarate + O2 = L-lysyl(4)-[histone H3] + formaldehyde + succinate + CO2. The catalysed reaction is N(6),N(6),N(6)-trimethyl-L-lysyl(4)-[histone H3] + 3 2-oxoglutarate + 3 O2 = L-lysyl(4)-[histone H3] + 3 formaldehyde + 3 succinate + 3 CO2. Transcriptional repressor. Histone demethylase that demethylates 'Lys-4' (H3K4me) of histone H3 with a higher activity for H3K4me3 and H3K4me2 than H3K4me1. No activity on H3K9me3/2, H3K36me3/2 and H3K27me3/2. Function as a nocturne 'eraser' to counteract the diurnal 'writer' methylase activity of ATXR3/SDG2 thus orchestrating the circadian rhythm of histone modifications (e.g. H3K4me3) and modulating the rhythmic expression of diurnal target genes; this mechanism also relies on the circadian clock oscillators CCA1 and LHY. Involved in a negative regulation of root meristem growth upon suboptimal root growth conditions. Represses FT and TSF expression to inhibit the floral transition. Binds around the transcription start site of the FT locus. Involved in the DRM2-mediated maintenance of DNA methylation, but not required for the de novo DNA methylation. Required for demethylating histone H3K4me3 at the target of RNA silencing. Counteracts the DNA methylation of expressed transgenes; specific attenuation of transgene DNA methylation enhances the production of aberrant RNAs (e.g. uncapped and antisense) that readily induce systemic RDR6-dependent post-transcriptional transgene silencing (PTGS) spreading. Together with NAC051/NAC052 and NAC050, regulates gene expression and flowering time, probably by the promotion of RNA-mediated gene silencing. Together with JMJ16 and JMJ17, required for plant growth and development. Promotes local and systemic immunity (especially toward the bacterial pathogen Pseudomonas syringae Pst DC3000 avrRpt2) by regulating positively pathogen-induced H3K4me3 enrichment and expression of defense genes involved in salicylic acid (SA)- and pipecolic acid (Pip)-mediated defense pathways (e.g. PR1, FMO1, ALD1 and SARD4). This Arabidopsis thaliana (Mouse-ear cress) protein is Lysine-specific demethylase JMJ14.